The following is a 344-amino-acid chain: Phosphate acyltransferase (344 aa).

It belongs to the PlsX family. Homodimer. Probably interacts with PlsY.

The protein localises to the cytoplasm. The enzyme catalyses a fatty acyl-[ACP] + phosphate = an acyl phosphate + holo-[ACP]. It participates in lipid metabolism; phospholipid metabolism. Its function is as follows. Catalyzes the reversible formation of acyl-phosphate (acyl-PO(4)) from acyl-[acyl-carrier-protein] (acyl-ACP). This enzyme utilizes acyl-ACP as fatty acyl donor, but not acyl-CoA. This Actinobacillus pleuropneumoniae serotype 5b (strain L20) protein is Phosphate acyltransferase.